A 304-amino-acid polypeptide reads, in one-letter code: Acetylglutamate kinase (304 aa).

Residues 69–70 (GG), Arg-91, and Asn-202 each bind substrate.

This sequence belongs to the acetylglutamate kinase family. ArgB subfamily.

The protein localises to the cytoplasm. The enzyme catalyses N-acetyl-L-glutamate + ATP = N-acetyl-L-glutamyl 5-phosphate + ADP. It participates in amino-acid biosynthesis; L-arginine biosynthesis; N(2)-acetyl-L-ornithine from L-glutamate: step 2/4. Functionally, catalyzes the ATP-dependent phosphorylation of N-acetyl-L-glutamate. The sequence is that of Acetylglutamate kinase from Caulobacter sp. (strain K31).